A 227-amino-acid chain; its full sequence is 2-phospho-L-lactate guanylyltransferase (227 aa).

The protein belongs to the CofC family. Homodimer.

It carries out the reaction (2S)-2-phospholactate + GTP + H(+) = (2S)-lactyl-2-diphospho-5'-guanosine + diphosphate. The protein operates within cofactor biosynthesis; coenzyme F420 biosynthesis. Guanylyltransferase that catalyzes the activation of (2S)-2-phospholactate (2-PL) as (2S)-lactyl-2-diphospho-5'-guanosine, via the condensation of 2-PL with GTP. It is involved in the biosynthesis of coenzyme F420, a hydride carrier cofactor. The protein is 2-phospho-L-lactate guanylyltransferase of Methanocaldococcus sp. (strain FS406-22).